Reading from the N-terminus, the 602-residue chain is Aspartate--tRNA(Asp/Asn) ligase (602 aa).

E176 contributes to the L-aspartate binding site. An aspartate region spans residues 200–203 (QQFK). Positions 222 and 452 each coordinate L-aspartate. ATP is bound at residue 222 to 224 (RDE). Residue E490 participates in ATP binding. R497 is a binding site for L-aspartate. Position 542–545 (542–545 (GIDR)) interacts with ATP.

This sequence belongs to the class-II aminoacyl-tRNA synthetase family. Type 1 subfamily. Homodimer.

The protein resides in the cytoplasm. It catalyses the reaction tRNA(Asx) + L-aspartate + ATP = L-aspartyl-tRNA(Asx) + AMP + diphosphate. Functionally, aspartyl-tRNA synthetase with relaxed tRNA specificity since it is able to aspartylate not only its cognate tRNA(Asp) but also tRNA(Asn). Reaction proceeds in two steps: L-aspartate is first activated by ATP to form Asp-AMP and then transferred to the acceptor end of tRNA(Asp/Asn). The sequence is that of Aspartate--tRNA(Asp/Asn) ligase from Rickettsia conorii (strain ATCC VR-613 / Malish 7).